A 181-amino-acid polypeptide reads, in one-letter code: MFDATTILAYKGKNRAVIGGDGQVTFGNSVLKGNATKIRTLYNGKILAGFAGSTADAFNLFDMFEEFLEAKKGDILKSVVEFSKAWRKDKVLRRLEAMMIVLNSEHIFILTGNGDVVEPEDGEIASIGSGGNFAISAARALKKHSSLDEEALVRESLSIAADLCIYTNHNIKVLSLDGEKK.

The active site involves Thr-5. The Na(+) site is built by Ala-161, Cys-164, and Thr-167.

Belongs to the peptidase T1B family. HslV subfamily. As to quaternary structure, a double ring-shaped homohexamer of HslV is capped on each side by a ring-shaped HslU homohexamer. The assembly of the HslU/HslV complex is dependent on binding of ATP.

It is found in the cytoplasm. It catalyses the reaction ATP-dependent cleavage of peptide bonds with broad specificity.. Its activity is regulated as follows. Allosterically activated by HslU binding. Functionally, protease subunit of a proteasome-like degradation complex believed to be a general protein degrading machinery. The polypeptide is ATP-dependent protease subunit HslV (Sulfurimonas denitrificans (strain ATCC 33889 / DSM 1251) (Thiomicrospira denitrificans (strain ATCC 33889 / DSM 1251))).